A 92-amino-acid chain; its full sequence is Putative membrane protein insertion efficiency factor (92 aa).

Belongs to the UPF0161 family.

It localises to the cell membrane. Functionally, could be involved in insertion of integral membrane proteins into the membrane. The polypeptide is Putative membrane protein insertion efficiency factor (Tropheryma whipplei (strain TW08/27) (Whipple's bacillus)).